The following is a 534-amino-acid chain: MGSLLFDSPVGRFVASFPALSAAAGLIVAISFIYIRFIKTPKLDLPVVGNPGDKWDAQKHIVAGARKYPDTPYILPMDPPIVVLPIKIQDEVRNLPENVVSFTKEHQRNFFAQYTGIGDHRPEMITAIRQDLTRHIVSTIPGLQEEVRYGFDKEFGDCKDWTPFPLYMKVLRIVALTSGRVFVGRPLSREEEWLQRTISYTMDCVKARNAIREYPWWKRRWVTSSLPEIAKLTEHRTRGGVLLKPIMDAQLAKDSKREKIINEETGDEEGNFIEWLLKHTPGDLKMDPENLALNQMVLAFASVHTSSMSVTHAILELVTRPEYFAPLREELEEVRRADGHTVDDDGYIRLKKESINKLRKLDSFMKESQRFNPPISTSGTRICTADLKLSTGHTLPKGTRICFPSYDVHHNPKTTTYSPEYNPPGYTPPDQFDGLRFFKLREMPGKESRHQFATANHESLVFGFGNHTCPGRFFAANQIKIILAELLMNWDVRLKGDVEQKGGPEKRPQNMVVDLVITPNPMAMVEMKRRSRAV.

A helical membrane pass occupies residues 13–33 (FVASFPALSAAAGLIVAISFI). The N-linked (GlcNAc...) asparagine glycan is linked to asparagine 466. Cysteine 469 contacts heme.

Belongs to the cytochrome P450 family. Requires heme as cofactor.

The protein resides in the membrane. The enzyme catalyses ilicicolin C + NADPH + O2 + H(+) = ascochlorin + NADP(+) + 2 H2O. The protein operates within secondary metabolite biosynthesis; terpenoid biosynthesis. In terms of biological role, cytochrome P450 monooxygenase; part of the asc-1 gene cluster that mediates the biosynthesis of both ascochlorin and ascofuranone, a strong inhibitor of cyanide-insensitive alternative oxidases and a promising drug candidate against African trypanosomiasis. The first step in the pathway is performed by the non-reducing polyketide synthase ascC that produces orsellinic acid by condensing acetyl-CoA with 3 malonyl-CoA units. Orsellinic acid is then prenylated by the prenyltransferase ascA to yield ilicicolinic acid B. Ilicicolinic acid B is further reduced to ilicicolin B by the reductase ascB. The halogenase ascD then chlorinates ilicicolin B to produce ilicicolin A which is converted to ilicicolin A epoxide by the cytochrome P450 monooxygenase ascE that catalyzes stereoselective epoxidation of the terminal double bond of the prenyl group. Ilicicolin A epoxide is the last common precursor for the biosynthesis of ascofuranone and ascochlorin. The terpene cyclase ascF produces a monocyclic terpene, and the cyclization reaction is proposed to be initiated by protonation of the terminal epoxide of ilicicolin A epoxide to generate a monocyclic tertiarycation, which is followed by a series of hydride and methyl shifts with abstraction of proton, leading to the formation of the (14S,15R,19R)-trimethylcyclohexanone ring structure of ilicicolin C, which is finally reduced to ascochlorin by the dehydrogenase ascG. On the other hand, ilicicolin A epoxide is hydroxylated by the cytochrome P450 monooxygenase ascH, and the resultant product is cyclized by the terpene cyclase ascI to ascofuranol via protonation-initiated epoxide ring opening, which facilitates the 6-endo-tet cyclization to form the tetrahy-drofuran ring. Finally, ascofuranol is oxidized into ascofuranone by ascJ. This Acremonium egyptiacum (Oospora egyptiaca) protein is Cytochrome P450 monooxygenase ascG.